An 88-amino-acid polypeptide reads, in one-letter code: Small ribosomal subunit protein uS15 (88 aa).

It belongs to the universal ribosomal protein uS15 family. Part of the 30S ribosomal subunit. Forms a bridge to the 50S subunit in the 70S ribosome, contacting the 23S rRNA.

In terms of biological role, one of the primary rRNA binding proteins, it binds directly to 16S rRNA where it helps nucleate assembly of the platform of the 30S subunit by binding and bridging several RNA helices of the 16S rRNA. Its function is as follows. Forms an intersubunit bridge (bridge B4) with the 23S rRNA of the 50S subunit in the ribosome. The sequence is that of Small ribosomal subunit protein uS15 from Geotalea daltonii (strain DSM 22248 / JCM 15807 / FRC-32) (Geobacter daltonii).